A 76-amino-acid chain; its full sequence is Acyl carrier protein (76 aa).

Residues 1-76 (MSVEEKISKI…DAIAYIKNKQ (76 aa)) form the Carrier domain. Residue S36 is modified to O-(pantetheine 4'-phosphoryl)serine.

It belongs to the acyl carrier protein (ACP) family. Post-translationally, 4'-phosphopantetheine is transferred from CoA to a specific serine of apo-ACP by AcpS. This modification is essential for activity because fatty acids are bound in thioester linkage to the sulfhydryl of the prosthetic group.

The protein localises to the cytoplasm. It participates in lipid metabolism; fatty acid biosynthesis. Its function is as follows. Carrier of the growing fatty acid chain in fatty acid biosynthesis. This Nitratidesulfovibrio vulgaris (strain DSM 19637 / Miyazaki F) (Desulfovibrio vulgaris) protein is Acyl carrier protein.